We begin with the raw amino-acid sequence, 1778 residues long: Nuclear receptor corepressor 1 (1778 aa).

The region spanning 125 to 176 (DRLEEWSPEERSLFKSRQADHVKIFHGLTEFFVDKTASDLVLFYYMNKKTED) is the SANT domain. A Myb-like domain is found at 356 to 398 (WTDDEKTKLVTLINSSPTLDWVSISEGMNRRPNECKMQYDAMN). Positions 409-421 (VDEEDGNGQEEGG) are enriched in acidic residues. 6 disordered regions span residues 409 to 671 (VDEE…TVST), 992 to 1024 (SLTP…AGRS), 1195 to 1218 (KLQQ…ATPQ), 1276 to 1339 (QHLQ…SRSV), 1414 to 1434 (PPKT…RTLS), and 1646 to 1718 (AAPT…PPLP). 2 stretches are compositionally biased toward low complexity: residues 431–442 (SSAAARRSGLAR) and 450–469 (TPRA…VTRA). Residues 478 to 493 (DLGEEIDEMEIEDNDE) show a composition bias toward acidic residues. Basic and acidic residues predominate over residues 494–513 (DASRGSRGKDSKAPSDRDGS). Acidic residues-rich tracts occupy residues 517–545 (MEGD…EEEE) and 599–616 (ESDD…DVDE). Low complexity-rich tracts occupy residues 626 to 639 (SSSS…SVGG) and 649 to 671 (LVQQ…TVST). Positions 1276-1285 (QHLQQQQQHH) are enriched in low complexity. Residues 1687–1696 (SSVNSNVSDV) show a composition bias toward low complexity.

This sequence belongs to the N-CoR nuclear receptor corepressors family. Interacts with gex-3. Interacts (via C-terminus) with nhr-60. In larvae, expressed in pharyngeal neurons, ventral and dorsal nerve cords, tail neurons, egg-laying neurons and egg-laying muscles. Detected in the neurons of the pharyngeal nerve ring, head neurons, tail neurons and egg-laying muscles in adults. Detected in male-specific tail ganglia and rays in males.

It localises to the nucleus. In terms of biological role, mediates transcriptional repression by certain nuclear receptors. Plays a role in development and neuronal function. May play a role in muscle-specific oxidative mitochondrial metabolism. This is Nuclear receptor corepressor 1 from Caenorhabditis elegans.